A 194-amino-acid polypeptide reads, in one-letter code: Holliday junction branch migration complex subunit RuvA (194 aa).

The interval 1–64 (MIGRLRGILA…EDSVSLYGFL (64 aa)) is domain I. The domain II stretch occupies residues 65-140 (REGERRLFRD…RAADFSSGAP (76 aa)). The segment at 140–144 (PITGQ) is flexible linker. Residues 145 to 194 (LGPDAVSEATVALQQLGYKPAEAARMAREAGAEGDEVATVIRKALQAALR) form a domain III region.

It belongs to the RuvA family. In terms of assembly, homotetramer. Forms an RuvA(8)-RuvB(12)-Holliday junction (HJ) complex. HJ DNA is sandwiched between 2 RuvA tetramers; dsDNA enters through RuvA and exits via RuvB. An RuvB hexamer assembles on each DNA strand where it exits the tetramer. Each RuvB hexamer is contacted by two RuvA subunits (via domain III) on 2 adjacent RuvB subunits; this complex drives branch migration. In the full resolvosome a probable DNA-RuvA(4)-RuvB(12)-RuvC(2) complex forms which resolves the HJ.

Its subcellular location is the cytoplasm. Functionally, the RuvA-RuvB-RuvC complex processes Holliday junction (HJ) DNA during genetic recombination and DNA repair, while the RuvA-RuvB complex plays an important role in the rescue of blocked DNA replication forks via replication fork reversal (RFR). RuvA specifically binds to HJ cruciform DNA, conferring on it an open structure. The RuvB hexamer acts as an ATP-dependent pump, pulling dsDNA into and through the RuvAB complex. HJ branch migration allows RuvC to scan DNA until it finds its consensus sequence, where it cleaves and resolves the cruciform DNA. This is Holliday junction branch migration complex subunit RuvA from Xanthomonas campestris pv. campestris (strain 8004).